Consider the following 195-residue polypeptide: HTH-type transcriptional regulator BetI (195 aa).

The HTH tetR-type domain occupies 8–68; it reads SIRRRQLIDA…ATMRDITSQL (61 aa). Residues 31–50 constitute a DNA-binding region (H-T-H motif); it reads TIAQIARRAGVSTGIISHYF.

The protein operates within amine and polyamine biosynthesis; betaine biosynthesis via choline pathway [regulation]. Repressor involved in the biosynthesis of the osmoprotectant glycine betaine. It represses transcription of the choline transporter BetT and the genes of BetAB involved in the synthesis of glycine betaine. The polypeptide is HTH-type transcriptional regulator BetI (Escherichia coli (strain UTI89 / UPEC)).